The sequence spans 339 residues: UDP-N-acetylglucosamine--N-acetylmuramyl-(pentapeptide) pyrophosphoryl-undecaprenol N-acetylglucosamine transferase (339 aa).

Residues 11–13, Asn127, Arg170, Ser188, Ile235, and Gln280 contribute to the UDP-N-acetyl-alpha-D-glucosamine site; that span reads TGG.

This sequence belongs to the glycosyltransferase 28 family. MurG subfamily.

Its subcellular location is the cell inner membrane. It carries out the reaction di-trans,octa-cis-undecaprenyl diphospho-N-acetyl-alpha-D-muramoyl-L-alanyl-D-glutamyl-meso-2,6-diaminopimeloyl-D-alanyl-D-alanine + UDP-N-acetyl-alpha-D-glucosamine = di-trans,octa-cis-undecaprenyl diphospho-[N-acetyl-alpha-D-glucosaminyl-(1-&gt;4)]-N-acetyl-alpha-D-muramoyl-L-alanyl-D-glutamyl-meso-2,6-diaminopimeloyl-D-alanyl-D-alanine + UDP + H(+). It functions in the pathway cell wall biogenesis; peptidoglycan biosynthesis. Its function is as follows. Cell wall formation. Catalyzes the transfer of a GlcNAc subunit on undecaprenyl-pyrophosphoryl-MurNAc-pentapeptide (lipid intermediate I) to form undecaprenyl-pyrophosphoryl-MurNAc-(pentapeptide)GlcNAc (lipid intermediate II). The protein is UDP-N-acetylglucosamine--N-acetylmuramyl-(pentapeptide) pyrophosphoryl-undecaprenol N-acetylglucosamine transferase of Thermotoga maritima (strain ATCC 43589 / DSM 3109 / JCM 10099 / NBRC 100826 / MSB8).